A 303-amino-acid polypeptide reads, in one-letter code: Glycine--tRNA ligase alpha subunit (303 aa).

It belongs to the class-II aminoacyl-tRNA synthetase family. Tetramer of two alpha and two beta subunits.

It localises to the cytoplasm. The enzyme catalyses tRNA(Gly) + glycine + ATP = glycyl-tRNA(Gly) + AMP + diphosphate. This chain is Glycine--tRNA ligase alpha subunit, found in Streptococcus equi subsp. equi (strain 4047).